Here is a 1316-residue protein sequence, read N- to C-terminus: DNA-directed RNA polymerase subunit beta' (1316 aa).

Zn(2+) contacts are provided by cysteine 60, cysteine 62, cysteine 75, and cysteine 78. 3 residues coordinate Mg(2+): aspartate 535, aspartate 537, and aspartate 539. Zn(2+) is bound by residues cysteine 891, cysteine 968, cysteine 975, and cysteine 978.

It belongs to the RNA polymerase beta' chain family. In terms of assembly, the RNAP catalytic core consists of 2 alpha, 1 beta, 1 beta' and 1 omega subunit. When a sigma factor is associated with the core the holoenzyme is formed, which can initiate transcription. It depends on Mg(2+) as a cofactor. The cofactor is Zn(2+).

It catalyses the reaction RNA(n) + a ribonucleoside 5'-triphosphate = RNA(n+1) + diphosphate. Functionally, DNA-dependent RNA polymerase catalyzes the transcription of DNA into RNA using the four ribonucleoside triphosphates as substrates. In Mycobacterium leprae (strain Br4923), this protein is DNA-directed RNA polymerase subunit beta'.